The primary structure comprises 116 residues: UPF0102 protein LA_2381 (116 aa).

The protein belongs to the UPF0102 family.

The polypeptide is UPF0102 protein LA_2381 (Leptospira interrogans serogroup Icterohaemorrhagiae serovar Lai (strain 56601)).